A 388-amino-acid polypeptide reads, in one-letter code: Protein RMD5 homolog (388 aa).

Residues 112 to 144 enclose the LisH domain; that stretch reads DTHIVNQIIANFFYRQGMFDIGDCFVAETGESE. The CTLH domain maps to 150 to 207; sequence SFVEMYRILEAMKRRDLEPALNWAVSNSDKLKEARSDLEMKLHSLHFLEIARGKNSKE. The segment at 330–374 adopts an RING-Gid-type zinc-finger fold; it reads CPVSKEQSSDDNPPMMMSCGHVLCKQTINKMSKNGSKSSFKCPYC.

As to quaternary structure, interacts with RANBPM.

The protein resides in the cytoplasm. This Arabidopsis thaliana (Mouse-ear cress) protein is Protein RMD5 homolog.